Here is a 290-residue protein sequence, read N- to C-terminus: Nucleotide-binding protein Clos_0574 (290 aa).

Residue 8 to 15 (GLSGAGKS) coordinates ATP. GTP is bound at residue 59-62 (DIRG).

It belongs to the RapZ-like family.

In terms of biological role, displays ATPase and GTPase activities. The polypeptide is Nucleotide-binding protein Clos_0574 (Alkaliphilus oremlandii (strain OhILAs) (Clostridium oremlandii (strain OhILAs))).